We begin with the raw amino-acid sequence, 615 residues long: Chaperone protein DnaK (615 aa).

A Phosphothreonine; by autocatalysis modification is found at Thr175. Residues 573–615 (SQEMYQKAAQEQQAAQGAEQAQDNGPKDDNVVDADFKEVDEDK) are disordered. A compositionally biased stretch (low complexity) spans 580–594 (AAQEQQAAQGAEQAQ). Basic and acidic residues predominate over residues 597–609 (GPKDDNVVDADFK).

This sequence belongs to the heat shock protein 70 family.

Acts as a chaperone. The protein is Chaperone protein DnaK of Clostridioides difficile (strain 630) (Peptoclostridium difficile).